A 465-amino-acid polypeptide reads, in one-letter code: Indoleacetamide hydrolase (465 aa).

The disordered stretch occupies residues 1 to 40 (MVRGRHRSRDPQRRDLRGRDRRSASRTDARRQSAAERGCR). Positions 9-39 (RDPQRRDLRGRDRRSASRTDARRQSAAERGC) are enriched in basic and acidic residues. The active-site Charge relay system is the S149. S173 (acyl-ester intermediate) is an active-site residue.

The protein belongs to the amidase family.

The protein operates within plant hormone metabolism; auxin biosynthesis. In terms of biological role, hydrolyzes indole-3-acetamide (IAM) into indole-3-acetic acid (IAA). This Bradyrhizobium japonicum protein is Indoleacetamide hydrolase (bam).